Reading from the N-terminus, the 276-residue chain is Putative aliphatic sulfonates transport permease protein SsuC (276 aa).

A run of 7 helical transmembrane segments spans residues 32-52 (GLLL…LGVV), 54-74 (ATVL…ILSG), 87-107 (AALG…LAGF), 119-141 (LQML…FGFD), 146-168 (ILLI…IRGV), 199-219 (ILLG…VAEL), and 242-262 (VFAG…FVRL). One can recognise an ABC transmembrane type-1 domain in the interval 80–260 (LQISIYRAAL…VVGKLTDSFV (181 aa)).

Belongs to the binding-protein-dependent transport system permease family. CysTW subfamily.

Its subcellular location is the cell membrane. Its function is as follows. Part of a binding-protein-dependent transport system for aliphatic sulfonates. Probably responsible for the translocation of the substrate across the membrane. This is Putative aliphatic sulfonates transport permease protein SsuC (ssuC) from Bacillus subtilis (strain 168).